A 126-amino-acid polypeptide reads, in one-letter code: Profilin-3 (126 aa).

It belongs to the profilin family. Occurs in many kinds of cells as a complex with monomeric actin in a 1:1 ratio.

The protein localises to the cytoplasm. The protein resides in the cytoskeleton. Its function is as follows. Binds to actin and affects the structure of the cytoskeleton. At high concentrations, profilin prevents the polymerization of actin, whereas it enhances it at low concentrations. By binding to PIP2, it inhibits the formation of IP3 and DG. This chain is Profilin-3 (proC), found in Dictyostelium discoideum (Social amoeba).